A 577-amino-acid chain; its full sequence is Cytidine monophosphate-N-acetylneuraminic acid hydroxylase (577 aa).

A propeptide spanning residues 1 to 4 is cleaved from the precursor; that stretch reads MMDR. A Rieske domain is found at 14 to 112; it reads LSPAEVANLK…IEMDENNGLS (99 aa). [2Fe-2S] cluster-binding residues include Cys54, His56, Cys75, and His78.

This sequence belongs to the CMP-Neu5Ac hydroxylase family. Requires [2Fe-2S] cluster as cofactor. Expressed in all tissues tested, except in brain.

It localises to the cytoplasm. The protein resides in the endoplasmic reticulum. The enzyme catalyses CMP-N-acetyl-beta-neuraminate + 2 Fe(II)-[cytochrome b5] + O2 + 2 H(+) = CMP-N-glycoloyl-beta-neuraminate + 2 Fe(III)-[cytochrome b5] + H2O. It functions in the pathway amino-sugar metabolism; N-acetylneuraminate metabolism. Functionally, sialic acids are components of carbohydrate chains of glycoconjugates and are involved in cell-cell recognition and cell-pathogen interactions. Catalyzes the conversion of CMP-N-acetylneuraminic acid (CMP-Neu5Ac) into its hydroxylated derivative CMP-N-glycolylneuraminic acid (CMP-Neu5Gc), a sialic acid abundantly expressed at the surface of many cells. The polypeptide is Cytidine monophosphate-N-acetylneuraminic acid hydroxylase (Cmah) (Mus musculus (Mouse)).